We begin with the raw amino-acid sequence, 1533 residues long: Protein TALPID3 (1533 aa).

Positions 32-57 (LSANKRLPVGTGTSLNGTSRGSSDLT) are disordered. The segment covering 42 to 57 (TGTSLNGTSRGSSDLT) has biased composition (polar residues). Positions 182–223 (QSDLEAKVNSVTELLSKLQETDKHLQRVTEQQTSIQRKQEKL) form a coiled coil. Over residues 309 to 321 (KEVEDTSFDKQKS) the composition is skewed to basic and acidic residues. 2 disordered regions span residues 309 to 339 (KEVE…VSRD) and 377 to 400 (LTRK…TPEK). Phosphoserine is present on S406. Positions 467–501 (SVLKDAEKILRGVQNNKKVLEENLEAIIRAKDGAA) form a coiled coil. Residues 467–554 (SVLKDAEKIL…YEQKRFDQKN (88 aa)) form a required for centrosomal localization region. The disordered stretch occupies residues 546–575 (EQKRFDQKNQRTKKGQNMTKDIRTNTQDKT). Polar residues predominate over residues 560-575 (GQNMTKDIRTNTQDKT). 2 positions are modified to phosphothreonine: T1042 and T1046. S1050 carries the post-translational modification Phosphoserine. T1063 carries the post-translational modification Phosphothreonine. S1066 is modified (phosphoserine). Positions 1129-1156 (SSPELPKPWGDGDLPLEEENPNSPQEEL) are disordered.

This sequence belongs to the TALPID3 family. In terms of assembly, interacts with CCP110, CEP290, CEP97, KIF24. In terms of tissue distribution, ubiquitously expressed. Expressed in photoreceptor cells (at protein level).

The protein localises to the cytoplasm. It is found in the cytoskeleton. It localises to the microtubule organizing center. Its subcellular location is the centrosome. The protein resides in the photoreceptor inner segment. The protein localises to the centriole. It is found in the cilium basal body. Required for ciliogenesis and sonic hedgehog/SHH signaling. Required for the centrosomal recruitment of RAB8A and for the targeting of centriole satellite proteins to centrosomes such as of PCM1. May play a role in early ciliogenesis in the disappearance of centriolar satellites that preceeds ciliary vesicle formation. Involved in regulation of cell intracellular organization. Involved in regulation of cell polarity. Required for asymmetrical localization of CEP120 to daughter centrioles. The sequence is that of Protein TALPID3 (KIAA0586) from Homo sapiens (Human).